A 3122-amino-acid chain; its full sequence is Large tegument protein deneddylase (3122 aa).

The tract at residues 1-248 (MIPAALPHPT…SETYLQDEPF (248 aa)) is deubiquitination activity. The 219-residue stretch at 20–238 (VVTGVRNQFA…TAAALHLYGA (219 aa)) folds into the Peptidase C76 domain. Active-site residues include Cys40, Asp172, and His174. Disordered stretches follow at residues 281–367 (GSGP…GDAA) and 387–496 (RARY…PPGA). Residues 343 to 353 (SAPDAAASGPP) show a composition bias toward low complexity. Composition is skewed to basic residues over residues 387-400 (RARYSTGLPKRRRP) and 425-436 (KAKKKSAPKKKA). A compositionally biased stretch (low complexity) spans 437–454 (PVAAEVPASSPTPIAATV). Residues 548-578 (LELCVIFFFERVLAFLIENGARTHTQAGVAG) are interaction with inner tegument protein. Disordered regions lie at residues 2494 to 2539 (YQRP…ADPG), 2570 to 2974 (ASDD…THLP), and 3006 to 3059 (SDDE…SQFG). Pro residues-rich tracts occupy residues 2578 to 2590 (TPNPAPALLPPPA) and 2637 to 2654 (PSPPTPSPPADAALPPPA). Residues 2655-2667 (FSGSAAAFSAAVP) show a composition bias toward low complexity. Basic residues predominate over residues 2668–2681 (RVRRSRRTRAKSRA). Pro residues-rich tracts occupy residues 2690–2700 (GWRPPALPAPV) and 2710–2719 (PDQPPTPESA). Positions 2734–2743 (ASARGAFPAP) are enriched in low complexity. Pro residues-rich tracts occupy residues 2744 to 2753 (TLAPIPPPPA) and 2775 to 2785 (SPTPPRGPAAG). Composition is skewed to low complexity over residues 2786-2807 (PPRRLTRPAVASLSASLNSLPS) and 2814-2825 (HAAAVSAAAAAV). Pro residues predominate over residues 2841-2852 (SPPPLAPGPVAP). The segment covering 2853 to 2867 (SEPLCGWVVPGGPVA) has biased composition (low complexity). 11 tandem repeats follow at residues 2891–2895 (PQPPL), 2896–2900 (PQPPL), 2901–2905 (PQPPL), 2906–2910 (PQPPL), 2911–2915 (PQPPL), 2916–2920 (PQPPL), 2921–2925 (PQPPL), 2926–2930 (PQPPL), 2931–2935 (PQPPL), 2936–2940 (PQPPL), and 2941–2945 (PQPPL). The 11 X 5 AA tandem repeats of P-Q-P-P-L stretch occupies residues 2891 to 2945 (PQPPLPQPPLPQPPLPQPPLPQPPLPQPPLPQPPLPQPPLPQPPLPQPPLPQPPL). The segment covering 2891 to 2947 (PQPPLPQPPLPQPPLPQPPLPQPPLPQPPLPQPPLPQPPLPQPPLPQPPLPQPPLPP) has biased composition (pro residues). 2 stretches are compositionally biased toward polar residues: residues 2950 to 2959 (RTLTPQSRDS) and 2965 to 2974 (SPTHTNTHLP). Residues 3006 to 3020 (SDDEHSDADSLRFSD) are compositionally biased toward basic and acidic residues. Pro residues predominate over residues 3029–3045 (PLPPEPHLPPADEPPGP).

The protein belongs to the herpesviridae large tegument protein family. Interacts with host CUL1 and CUL4A; these interactions inhibit the E3 ligase activity of cullins. Interacts with inner tegument protein. Interacts with capsid vertex specific component CVC2. Interacts with the major capsid protein/MCP. In terms of processing, proteolytically processed, possibly into several polypeptides. Enzymatic activity is only detectable following cleavage of the UL36 protein, which occurs late during viral replication.

It localises to the virion tegument. The protein localises to the host cytoplasm. Its subcellular location is the host nucleus. The catalysed reaction is Thiol-dependent hydrolysis of ester, thioester, amide, peptide and isopeptide bonds formed by the C-terminal Gly of ubiquitin (a 76-residue protein attached to proteins as an intracellular targeting signal).. Large tegument protein that plays multiple roles in the viral cycle. During viral entry, remains associated with the capsid while most of the tegument is detached and participates in the capsid transport toward the host nucleus. Plays a role in the routing of the capsid at the nuclear pore complex and subsequent uncoating. Within the host nucleus, acts as a deneddylase and promotes the degradation of nuclear CRLs (cullin-RING ubiquitin ligases) and thereby stabilizes nuclear CRL substrates, while cytoplasmic CRLs remain unaffected. These modifications prevent host cell cycle S-phase progression and create a favorable environment allowing efficient viral genome replication. Participates later in the secondary envelopment of capsids. Indeed, plays a linker role for the association of the outer viral tegument to the capsids together with the inner tegument protein. The chain is Large tegument protein deneddylase from Human herpesvirus 2 (strain HG52) (HHV-2).